Consider the following 305-residue polypeptide: Methionyl-tRNA formyltransferase (305 aa).

110–113 (SLLP) contributes to the (6S)-5,6,7,8-tetrahydrofolate binding site.

This sequence belongs to the Fmt family.

The enzyme catalyses L-methionyl-tRNA(fMet) + (6R)-10-formyltetrahydrofolate = N-formyl-L-methionyl-tRNA(fMet) + (6S)-5,6,7,8-tetrahydrofolate + H(+). Its function is as follows. Attaches a formyl group to the free amino group of methionyl-tRNA(fMet). The formyl group appears to play a dual role in the initiator identity of N-formylmethionyl-tRNA by promoting its recognition by IF2 and preventing the misappropriation of this tRNA by the elongation apparatus. The protein is Methionyl-tRNA formyltransferase of Gluconacetobacter diazotrophicus (strain ATCC 49037 / DSM 5601 / CCUG 37298 / CIP 103539 / LMG 7603 / PAl5).